A 513-amino-acid polypeptide reads, in one-letter code: Putative thymidine phosphorylase 2 (513 aa).

Belongs to the thymidine/pyrimidine-nucleoside phosphorylase family. Type 2 subfamily.

It catalyses the reaction thymidine + phosphate = 2-deoxy-alpha-D-ribose 1-phosphate + thymine. The protein is Putative thymidine phosphorylase 2 of Acidovorax sp. (strain JS42).